The primary structure comprises 1075 residues: DNA-directed RNA polymerase subunit beta (1075 aa).

Belongs to the RNA polymerase beta chain family. In plastids the minimal PEP RNA polymerase catalytic core is composed of four subunits: alpha, beta, beta', and beta''. When a (nuclear-encoded) sigma factor is associated with the core the holoenzyme is formed, which can initiate transcription.

It is found in the plastid. It localises to the chloroplast. The enzyme catalyses RNA(n) + a ribonucleoside 5'-triphosphate = RNA(n+1) + diphosphate. Its function is as follows. DNA-dependent RNA polymerase catalyzes the transcription of DNA into RNA using the four ribonucleoside triphosphates as substrates. The sequence is that of DNA-directed RNA polymerase subunit beta from Zea mays (Maize).